The primary structure comprises 214 residues: Small ribosomal subunit protein uS3 (214 aa).

The region spanning 39 to 107 (IRAYLLKKPA…EVWVAVEEVK (69 aa)) is the KH type-2 domain.

Belongs to the universal ribosomal protein uS3 family. Part of the 30S ribosomal subunit. Forms a tight complex with proteins S10 and S14.

Binds the lower part of the 30S subunit head. Binds mRNA in the 70S ribosome, positioning it for translation. This is Small ribosomal subunit protein uS3 from Protochlamydia amoebophila (strain UWE25).